Consider the following 378-residue polypeptide: Ret finger protein-like 2 (378 aa).

The RING-type; degenerate zinc finger occupies 101–143; sequence CPVCSDYLEKPMSLECGCAVCLKCINSLQKEPHGEDLLCCCSS. In terms of domain architecture, B30.2/SPRY spans 168 to 362; it reads EPKLKKILQM…DQGVLSICPL (195 aa).

In terms of tissue distribution, seems to be expressed in prostate and less abundantly in adult brain, fetal liver, and fetal kidney.

This is Ret finger protein-like 2 (RFPL2) from Homo sapiens (Human).